The chain runs to 163 residues: N5-carboxyaminoimidazole ribonucleotide mutase (163 aa).

The substrate site is built by serine 11, aspartate 14, and arginine 41.

The protein belongs to the AIR carboxylase family. Class I subfamily.

The enzyme catalyses 5-carboxyamino-1-(5-phospho-D-ribosyl)imidazole + H(+) = 5-amino-1-(5-phospho-D-ribosyl)imidazole-4-carboxylate. It functions in the pathway purine metabolism; IMP biosynthesis via de novo pathway; 5-amino-1-(5-phospho-D-ribosyl)imidazole-4-carboxylate from 5-amino-1-(5-phospho-D-ribosyl)imidazole (N5-CAIR route): step 2/2. Catalyzes the conversion of N5-carboxyaminoimidazole ribonucleotide (N5-CAIR) to 4-carboxy-5-aminoimidazole ribonucleotide (CAIR). This is N5-carboxyaminoimidazole ribonucleotide mutase from Pseudomonas aeruginosa (strain ATCC 15692 / DSM 22644 / CIP 104116 / JCM 14847 / LMG 12228 / 1C / PRS 101 / PAO1).